A 63-amino-acid chain; its full sequence is Cecropin-2 (63 aa).

The first 21 residues, 1–21 (MNFNKVLVLLAVIFAVFAGQT), serve as a signal peptide directing secretion. Residues 22-23 (EA) constitute a propeptide that is removed on maturation. Residue lysine 62 is modified to Lysine amide.

Belongs to the cecropin family.

The protein resides in the secreted. Cecropins have lytic and antibacterial activity against several Gram-positive and Gram-negative bacteria. The polypeptide is Cecropin-2 (CEC2) (Ceratitis capitata (Mediterranean fruit fly)).